Here is a 373-residue protein sequence, read N- to C-terminus: MVSPGLDLELSFSQALQGFGFSPEVARLLWLPLPMLLVLVAAVVGVLVSVWLERKISAAVQQRIGPEYAGALGVLQPLADGLKLLVKEDIIPARADSLLFTLGPVLVVVPVIISWLIIPFGQNLLISNVGVGIFLWISFSSIQPIGLLMSGYASNNKYSLLGGLRAAAQSISYEIPLALAVLAIVMMTNSLSTVDIVGQQTGAGILSWNIWRQPVGFLIFWICALAECERLPFDLPEAEEELVAGYQTEYAGMKFALFYLAGYINLVLSAVLVSVLYLGGWGFPIPVEWLAGWLNQPIDAPLVQVITGTVGIVMTVLKAYLLVFVAILLRWTTPRVRIDQLLDLGWKFLLPLSLVNLLVTAALKLAFPVAFGG.

8 consecutive transmembrane segments (helical) span residues 28–48, 98–118, 129–149, 177–197, 205–225, 267–287, 309–329, and 348–368; these read LLWLPLPMLLVLVAAVVGVLV, LLFTLGPVLVVVPVIISWLII, VGVGIFLWISFSSIQPIGLLM, LALAVLAIVMMTNSLSTVDIV, ILSWNIWRQPVGFLIFWICAL, VLSAVLVSVLYLGGWGFPIPV, TVGIVMTVLKAYLLVFVAILL, and FLLPLSLVNLLVTAALKLAFP.

Belongs to the complex I subunit 1 family. As to quaternary structure, NDH-1 is composed of at least 11 different subunits.

The protein resides in the cellular thylakoid membrane. It carries out the reaction a plastoquinone + NADH + (n+1) H(+)(in) = a plastoquinol + NAD(+) + n H(+)(out). It catalyses the reaction a plastoquinone + NADPH + (n+1) H(+)(in) = a plastoquinol + NADP(+) + n H(+)(out). In terms of biological role, NDH-1 shuttles electrons from an unknown electron donor, via FMN and iron-sulfur (Fe-S) centers, to quinones in the respiratory and/or the photosynthetic chain. The immediate electron acceptor for the enzyme in this species is believed to be plastoquinone. Couples the redox reaction to proton translocation, and thus conserves the redox energy in a proton gradient. The chain is NAD(P)H-quinone oxidoreductase subunit 1 from Synechococcus sp. (strain CC9605).